The primary structure comprises 210 residues: Large ribosomal subunit protein uL3 (210 aa).

The segment at 126–150 (VSATHGSHRNHRKPGSVGASSTPSR) is disordered.

Belongs to the universal ribosomal protein uL3 family. As to quaternary structure, part of the 50S ribosomal subunit. Forms a cluster with proteins L14 and L19.

One of the primary rRNA binding proteins, it binds directly near the 3'-end of the 23S rRNA, where it nucleates assembly of the 50S subunit. In Tropheryma whipplei (strain TW08/27) (Whipple's bacillus), this protein is Large ribosomal subunit protein uL3.